Reading from the N-terminus, the 343-residue chain is Anthranilate phosphoribosyltransferase (343 aa).

5-phospho-alpha-D-ribose 1-diphosphate-binding positions include glycine 83, 86 to 87, threonine 91, 93 to 96, 111 to 119, and serine 123; these read GD, NIST, and KHGGRSVSS. Glycine 83 provides a ligand contact to anthranilate. Serine 95 contributes to the Mg(2+) binding site. An anthranilate-binding site is contributed by arginine 169. Positions 228 and 229 each coordinate Mg(2+).

The protein belongs to the anthranilate phosphoribosyltransferase family. In terms of assembly, homodimer. The cofactor is Mg(2+).

The enzyme catalyses N-(5-phospho-beta-D-ribosyl)anthranilate + diphosphate = 5-phospho-alpha-D-ribose 1-diphosphate + anthranilate. The protein operates within amino-acid biosynthesis; L-tryptophan biosynthesis; L-tryptophan from chorismate: step 2/5. Its function is as follows. Catalyzes the transfer of the phosphoribosyl group of 5-phosphorylribose-1-pyrophosphate (PRPP) to anthranilate to yield N-(5'-phosphoribosyl)-anthranilate (PRA). The chain is Anthranilate phosphoribosyltransferase from Thiobacillus denitrificans (strain ATCC 25259 / T1).